We begin with the raw amino-acid sequence, 256 residues long: PHD finger protein ALFIN-LIKE 4 (256 aa).

A disordered region spans residues 149-195 (QSKTANGSSKNKSGSKPPKRPNSDSKPQKQVQAKYEEENGGRGNGGD). Over residues 154-164 (NGSSKNKSGSK) the composition is skewed to low complexity. The segment at 200 to 252 (ETICGACGEAYANGEFWICCDICETWFHGKCVRITPAKAEHIKHYKCPGCSNK) adopts a PHD-type zinc-finger fold.

The protein belongs to the Alfin family. Interacts with H3K4me3 and to a lesser extent with H3K4me2.

Its subcellular location is the nucleus. In terms of biological role, histone-binding component that specifically recognizes H3 tails trimethylated on 'Lys-4' (H3K4me3), which mark transcription start sites of virtually all active genes. This is PHD finger protein ALFIN-LIKE 4 from Oryza sativa subsp. indica (Rice).